Here is a 1250-residue protein sequence, read N- to C-terminus: DNA topoisomerase 3-alpha (1250 aa).

Positions 27 to 171 (KYLNVAEKND…NISVYRATFS (145 aa)) constitute a Toprim domain. One can recognise a Topo IA-type catalytic domain in the interval 189 to 610 (DKRQSDAVDV…EQIAKYKQAY (422 aa)). Residue Tyr-356 is the O-(5'-phospho-DNA)-tyrosine intermediate of the active site. The span at 769–835 (RGGGGGPGPG…GTGGGGLGGG (67 aa)) shows a compositional bias: gly residues. 2 disordered regions span residues 769-899 (RGGG…GLDE) and 953-1035 (NGGT…TVLC). Residues 840–865 (PGGESKKSATKKPPNEPKPKKTKEPK) are compositionally biased toward basic and acidic residues. Residues 866–886 (AAPNKKTSSKSSGSIRSFFTS) show a composition bias toward low complexity. Residues 956–965 (TMPTESNGDQ) show a composition bias toward polar residues. Basic and acidic residues-rich tracts occupy residues 966–994 (QLDKSLSEWIKEQDKADERPMLWGTRERA) and 1012–1021 (PRWDSVERDS). The segment covering 1022–1033 (TPPSSVPESETV) has biased composition (low complexity). Residues Cys-1035, Cys-1038, Cys-1061, and Cys-1067 each coordinate Zn(2+). The segment at 1035–1076 (CTGCQQPARQNTVRKNGPNLGRLYYKCPKPDECNFFQWADEP) adopts a GRF-type 1 zinc-finger fold. The tract at residues 1069–1150 (FFQWADEPPS…TATPGDGEEV (82 aa)) is disordered. Over residues 1079 to 1101 (SAKSKNSTGSAPQSTTSWGSNRV) the composition is skewed to polar residues. Over residues 1106-1134 (SIQQSNSQRGQSSMRSNSSSTVTITQTKT) the composition is skewed to low complexity. Zn(2+) contacts are provided by Cys-1152, Cys-1154, Cys-1177, and Cys-1184. A GRF-type 2 zinc finger spans residues 1152–1193 (CNCGQLASQLTVRKDGPNQGRPFYACPTREKSCGFFKWGDED). Residues 1188-1231 (KWGDEDQNQGASSTSWGSANRNPPGRSQPTAITSDGPKTRRCGL) form a disordered region. The span at 1195–1220 (NQGASSTSWGSANRNPPGRSQPTAIT) shows a compositional bias: polar residues.

It belongs to the type IA topoisomerase family.

It carries out the reaction ATP-independent breakage of single-stranded DNA, followed by passage and rejoining.. Functionally, releases the supercoiling and torsional tension of DNA introduced during the DNA replication and transcription by transiently cleaving and rejoining one strand of the DNA duplex. Introduces a single-strand break via transesterification at a target site in duplex DNA. The scissile phosphodiester is attacked by the catalytic tyrosine of the enzyme, resulting in the formation of a DNA-(5'-phosphotyrosyl)-enzyme intermediate and the expulsion of a 3'-OH DNA strand. The free DNA strand than undergoes passage around the unbroken strand thus removing DNA supercoils. Finally, in the religation step, the DNA 3'-OH attacks the covalent intermediate to expel the active-site tyrosine and restore the DNA phosphodiester backbone. Weakly relaxes negative supercoils and displays a distinct preference for binding single-stranded DNA. The chain is DNA topoisomerase 3-alpha (Top3alpha) from Drosophila melanogaster (Fruit fly).